The following is a 743-amino-acid chain: Ectonucleotide pyrophosphatase/phosphodiesterase C27A7.3 (743 aa).

Residues 1-23 lie on the Cytoplasmic side of the membrane; the sequence is MSNRVVDVNSKKTGTSWKKKLMK. The helical; Signal-anchor for type II membrane protein transmembrane segment at 24 to 44 threads the bilayer; the sequence is IVIWSLAMLSFIAGLVLLGLV. The Lumenal portion of the chain corresponds to 45-743; that stretch reads AAATISGSKN…LRRNITTSLW (699 aa). Asp87 and Thr123 together coordinate Zn(2+). Residue Thr123 is the Nucleophile of the active site. Asn195 is a glycosylation site (N-linked (GlcNAc...) asparagine). The Zn(2+) site is built by Asp243, His247, Asp286, and His287. 2 N-linked (GlcNAc...) asparagine glycosylation sites follow: Asn293 and Asn320. His383 provides a ligand contact to Zn(2+). 3 N-linked (GlcNAc...) asparagine glycosylation sites follow: Asn406, Asn434, and Asn536. Ca(2+) is bound by residues Asp635, Asn637, Asp639, Ile641, and Asp643. A glycan (N-linked (GlcNAc...) asparagine) is linked at Asn737.

This sequence belongs to the nucleotide pyrophosphatase/phosphodiesterase family. It depends on Zn(2+) as a cofactor. Ca(2+) is required as a cofactor.

The protein localises to the membrane. Functionally, probable phosphodiesterase. The chain is Ectonucleotide pyrophosphatase/phosphodiesterase C27A7.3 from Caenorhabditis elegans.